Here is a 166-residue protein sequence, read N- to C-terminus: Large ribosomal subunit protein uL10 (166 aa).

This sequence belongs to the universal ribosomal protein uL10 family. In terms of assembly, part of the ribosomal stalk of the 50S ribosomal subunit. The N-terminus interacts with L11 and the large rRNA to form the base of the stalk. The C-terminus forms an elongated spine to which L12 dimers bind in a sequential fashion forming a multimeric L10(L12)X complex.

Its function is as follows. Forms part of the ribosomal stalk, playing a central role in the interaction of the ribosome with GTP-bound translation factors. The polypeptide is Large ribosomal subunit protein uL10 (Staphylococcus haemolyticus (strain JCSC1435)).